A 284-amino-acid polypeptide reads, in one-letter code: Malonyl-[acyl-carrier protein] O-methyltransferase (284 aa).

It belongs to the methyltransferase superfamily.

The catalysed reaction is malonyl-[ACP] + S-adenosyl-L-methionine = malonyl-[ACP] methyl ester + S-adenosyl-L-homocysteine. It functions in the pathway cofactor biosynthesis; biotin biosynthesis. Converts the free carboxyl group of a malonyl-thioester to its methyl ester by transfer of a methyl group from S-adenosyl-L-methionine (SAM). It allows to synthesize pimeloyl-ACP via the fatty acid synthetic pathway. This Legionella pneumophila subsp. pneumophila (strain Philadelphia 1 / ATCC 33152 / DSM 7513) protein is Malonyl-[acyl-carrier protein] O-methyltransferase.